The sequence spans 596 residues: Serine/arginine (SR)-type shuttling mRNA binding protein (596 aa).

Polar residues predominate over residues 1–11 (MSEVEYNQENT). Disordered regions lie at residues 1 to 83 (MSEV…SRKS) and 244 to 279 (DRED…FGPP). Composition is skewed to basic and acidic residues over residues 12 to 23 (HYAEVDNFDRDA) and 42 to 66 (SDRR…RSFN). Residues 182–246 (FHRQPSIVYT…RQVFVREDRE (65 aa)) enclose the RRM 1 domain. Residues 259-275 (PRGGGRGGLGGSSGRGS) show a composition bias toward gly residues. Positions 302 to 379 (TQLFIGNLPF…RMLEVRLDKF (78 aa)) constitute an RRM 2 domain. Residues 458–478 (GYSTRASGPTSARAPAPPAAP) are disordered. The 77-residue stretch at 480–556 (QQIFVKNLPW…RPLDIEFNRR (77 aa)) folds into the RRM 3 domain. Gly residues predominate over residues 563–572 (GGGSVNGGND). Positions 563 to 596 (GGGSVNGGNDGNAPMVEVSAQDDEDGDAPVPMQG) are disordered.

It is found in the nucleus. Its function is as follows. Binds to intron-containing transcripts and is involved in quality control for the export of spliced mRNAs from the nucleus. Binds to pre-mRNAs until splicing is completed or until faulty mRNAs are degraded. This chain is Serine/arginine (SR)-type shuttling mRNA binding protein, found in Mycosarcoma maydis (Corn smut fungus).